The primary structure comprises 427 residues: Trigger factor (427 aa).

In terms of domain architecture, PPIase FKBP-type spans 163-248; sequence GDTVILDFEG…LHEIKTKEVP (86 aa).

The protein belongs to the FKBP-type PPIase family. Tig subfamily.

It is found in the cytoplasm. It carries out the reaction [protein]-peptidylproline (omega=180) = [protein]-peptidylproline (omega=0). Functionally, involved in protein export. Acts as a chaperone by maintaining the newly synthesized protein in an open conformation. Functions as a peptidyl-prolyl cis-trans isomerase. The protein is Trigger factor of Listeria monocytogenes serotype 4b (strain CLIP80459).